A 624-amino-acid chain; its full sequence is Penicillin-binding protein 4 (624 aa).

The signal sequence occupies residues 1–21 (MTMLRKIIGWILLLCIIPLFA). The Proton donor; for transglycosylase activity role is filled by Glu96. Residue Ser388 is the Acyl-ester intermediate; for transpeptidase activity of the active site.

This sequence in the N-terminal section; belongs to the glycosyltransferase 51 family. It in the C-terminal section; belongs to the transpeptidase family. The N-terminus is blocked.

The protein resides in the cell membrane. It carries out the reaction [GlcNAc-(1-&gt;4)-Mur2Ac(oyl-L-Ala-gamma-D-Glu-L-Lys-D-Ala-D-Ala)](n)-di-trans,octa-cis-undecaprenyl diphosphate + beta-D-GlcNAc-(1-&gt;4)-Mur2Ac(oyl-L-Ala-gamma-D-Glu-L-Lys-D-Ala-D-Ala)-di-trans,octa-cis-undecaprenyl diphosphate = [GlcNAc-(1-&gt;4)-Mur2Ac(oyl-L-Ala-gamma-D-Glu-L-Lys-D-Ala-D-Ala)](n+1)-di-trans,octa-cis-undecaprenyl diphosphate + di-trans,octa-cis-undecaprenyl diphosphate + H(+). The enzyme catalyses Preferential cleavage: (Ac)2-L-Lys-D-Ala-|-D-Ala. Also transpeptidation of peptidyl-alanyl moieties that are N-acyl substituents of D-alanine.. In terms of biological role, cell wall formation. Synthesis of cross-linked peptidoglycan from the lipid intermediates. The enzyme has a penicillin-insensitive transglycosylase N-terminal domain (formation of linear glycan strands) and a penicillin-sensitive transpeptidase C-terminal domain (cross-linking of the peptide subunits). Has a partially redundant function with PBP-2A (pbpA) during spore outgrowth. This Bacillus subtilis (strain 168) protein is Penicillin-binding protein 4.